A 1502-amino-acid polypeptide reads, in one-letter code: Heme-responsive zinc finger transcription factor HAP1 (1502 aa).

The segment covering 1–50 has biased composition (polar residues); sequence MSNTPYNSSVPSIASMTQSSVSRSPNMHTATTPGANTSSNSPPLHMSSDS. The segment at 1–56 is disordered; the sequence is MSNTPYNSSVPSIASMTQSSVSRSPNMHTATTPGANTSSNSPPLHMSSDSSKIKRK. Zn(2+)-binding residues include cysteine 64, cysteine 67, cysteine 74, cysteine 81, cysteine 84, and cysteine 93. The segment at residues 64 to 93 is a DNA-binding region (zn(2)-C6 fungal-type); it reads CTICRKRKVKCDKLRPHCQQCTKTGVAHLC. Residues 105–134 adopt a coiled-coil conformation; that stretch reads EKELLKDNELKKLRERVKSLEKTLSKVHSS. The interval 126-208 is disordered; the sequence is KTLSKVHSSP…ANSSSLSISN (83 aa). Over residues 130-142 the composition is skewed to low complexity; the sequence is KVHSSPSSNSLKS. Composition is skewed to polar residues over residues 143-152 and 160-176; these read YNTPESSNLF and TLVNANTGSASSASHMH. Low complexity predominate over residues 177-208; that stretch reads QQQQQQQQQEQQQDFSRSANANANSSSLSISN. Positions 244–444 are heme-responsive; required for HMC formation; sequence KGDPYLKLLW…NTIPHHQPQS (201 aa). 6 HRM repeats span residues 280–285, 299–304, 323–328, 347–352, 389–394, and 415–420; these read KCPINH, KCPVDH, RCPVDH, and RCPIDH. 2 stretches are compositionally biased toward polar residues: residues 432 to 447 and 706 to 734; these read STHNTIPHHQPQSGSH and QLNATIPATSQDVSNNGSKKANPSTNPTL. Disordered regions lie at residues 432–458 and 706–767; these read STHNTIPHHQPQSGSHARSHPAQSRKH and QLNA…KENQ. Residues 735 to 759 show a composition bias toward low complexity; the sequence is NNNMSAATTNSSSRSGSADSRSGSN. The stretch at 1192-1197 is one HRM 7 repeat; sequence KCPVYQ. Residues 1384–1411 form a disordered region; that stretch reads TANTDTSANGSALSTLTSPQGSDLASNS. The span at 1388-1411 shows a compositional bias: polar residues; that stretch reads DTSANGSALSTLTSPQGSDLASNS.

As to quaternary structure, binds DNA as a homodimer. Interacts with SRO9 and YDJ1. In the absence of heme, binds to at least four cellular proteins, including YDJ1 and SRO9, forming a high-molecular-weight complex (HMC) which results in repression of its activity and dictates its DNA-binding specificity.

It localises to the nucleus. Its function is as follows. Regulation of oxygen dependent gene expression. It modulates the expression of Iso-1 (CYP1) and Iso-2 (CYP3) cytochrome c. In response to heme, promotes transcription of genes encoding functions required for respiration, controlling oxidative damage and repression of anaerobic genes. Binds to the sequence 5'-CGGNNNTNNCGG-3'. Is non-functional in terms of iso-1 cytochrome c expression in strain S288c and its derivatives. This chain is Heme-responsive zinc finger transcription factor HAP1 (HAP1), found in Saccharomyces cerevisiae (strain ATCC 204508 / S288c) (Baker's yeast).